The chain runs to 376 residues: Lipoyl synthase 1, mitochondrial (376 aa).

The [4Fe-4S] cluster site is built by Cys-109, Cys-114, Cys-120, Cys-140, Cys-144, Cys-147, and Ser-356. Residues 125–345 enclose the Radical SAM core domain; it reads ETGTATATIM…QTLGMEMGFR (221 aa).

Belongs to the radical SAM superfamily. Lipoyl synthase family. It depends on [4Fe-4S] cluster as a cofactor.

It is found in the mitochondrion. It carries out the reaction [[Fe-S] cluster scaffold protein carrying a second [4Fe-4S](2+) cluster] + N(6)-octanoyl-L-lysyl-[protein] + 2 oxidized [2Fe-2S]-[ferredoxin] + 2 S-adenosyl-L-methionine + 4 H(+) = [[Fe-S] cluster scaffold protein] + N(6)-[(R)-dihydrolipoyl]-L-lysyl-[protein] + 4 Fe(3+) + 2 hydrogen sulfide + 2 5'-deoxyadenosine + 2 L-methionine + 2 reduced [2Fe-2S]-[ferredoxin]. Its pathway is protein modification; protein lipoylation via endogenous pathway; protein N(6)-(lipoyl)lysine from octanoyl-[acyl-carrier-protein]: step 2/2. Catalyzes the radical-mediated insertion of two sulfur atoms into the C-6 and C-8 positions of the octanoyl moiety bound to the lipoyl domains of lipoate-dependent enzymes, thereby converting the octanoylated domains into lipoylated derivatives. The polypeptide is Lipoyl synthase 1, mitochondrial (Pisum sativum (Garden pea)).